The sequence spans 279 residues: HTH-type transcriptional regulator BhcR (279 aa).

The span at 1-13 shows a compositional bias: basic residues; that stretch reads MSVQIRKRGRPRG. The interval 1 to 21 is disordered; the sequence is MSVQIRKRGRPRGRAGGLGAE. One can recognise an HTH iclR-type domain in the interval 26–87; that stretch reads IRALDRALDI…SQTQAWHVGP (62 aa). Residues 47 to 66 constitute a DNA-binding region (H-T-H motif); sequence LTEIAQRLDMAPSTVHRVLV. The region spanning 102–271 is the IclR-ED domain; it reads LVERARPLLR…ARELSFGMAP (170 aa).

In terms of biological role, transcriptional regulator of the bhc gene cluster involved in glycolate and glyoxylate assimilation via the beta-hydroxyaspartate cycle (BHAC). Glyoxylate negatively affects the interaction of BhcR with the promoter region of the bhc gene cluster. The polypeptide is HTH-type transcriptional regulator BhcR (Paracoccus denitrificans (strain Pd 1222)).